We begin with the raw amino-acid sequence, 202 residues long: D-alanyl-D-alanine dipeptidase (202 aa).

The Zn(2+) site is built by His116 and Asp123. Catalysis depends on Glu181, which acts as the Proton donor/acceptor. Residue His184 coordinates Zn(2+).

This sequence belongs to the peptidase M15D family. It depends on Zn(2+) as a cofactor.

It carries out the reaction D-alanyl-D-alanine + H2O = 2 D-alanine. Catalyzes hydrolysis of the D-alanyl-D-alanine dipeptide. In Enterococcus faecalis (strain ATCC 700802 / V583), this protein is D-alanyl-D-alanine dipeptidase (vanXB).